Here is a 500-residue protein sequence, read N- to C-terminus: Ent-kaurene oxidase P450-4 (500 aa).

A helical membrane pass occupies residues 6–26 (VHWLIYVAFGAWLCSYVIHVL). N240 carries N-linked (GlcNAc...) asparagine glycosylation. Position 441 (C441) interacts with heme. N475 carries an N-linked (GlcNAc...) asparagine glycan.

This sequence belongs to the cytochrome P450 family. It depends on heme as a cofactor.

It localises to the membrane. It catalyses the reaction ent-kaur-16-ene + 3 reduced [NADPH--hemoprotein reductase] + 3 O2 = ent-kaur-16-en-19-oate + 3 oxidized [NADPH--hemoprotein reductase] + 4 H2O + 4 H(+). It participates in plant hormone biosynthesis; gibberellin biosynthesis. Its function is as follows. Ent-kaurene oxidase; part of the gene cluster that mediates the biosynthesis of gibberellins (GAs), diterpenoids that may provide a selective advantage during infection of the preferred host plant, rice. Gibberellins (GAs) are diterpenoids and are synthesized via the mevalonate pathway. Biosynthesis of the major metabolite GA3 (gibberellic acid) from geranylgeranyl diphosphate (GGPP) requires 13 steps. The GGPP produced by the geranylgeranyl diphosphate synthase GGS2 is converted to ent-kaurene via ent-copalyldiphosphate in a two-step cyclization reaction performed by the bifunctional ent-copalyl diphosphate synthase/ent-kaurene synthase enzyme (CPS/KS). Ent-Kaurene is metabolized to GAs by a series of oxidation reactions catalyzed by cytochrome P450 monooxygenases. Cytochrome P450 monooxygenase P450-4 is an ent-kaurene oxidase that catalyzes the three oxidation steps between ent-kaurene and ent-kaurenoic acid. The highly multifunctional cytochrome P450 monooxygenase P450-1 then catalyzes four steps involving oxidation at two carbon atoms, in the main pathway from ent-kaurenoic acid to GA14 via GA12-aldehyde as well as producing kaurenolides and fujenoic acids as by-products. The cytochrome P450 monooxygenase P450-2 then converts GA14 to GA4 by removal of C-20. GA4 is further converted to GA7 by the GA4 desaturase DES via 1,2-desaturation before cytochrome P450 monooxygenase P450-3, a 13-hydroxylase, hydroxylates GA7 to GA3, the final product of the GA-biosynthetic pathway. This chain is Ent-kaurene oxidase P450-4, found in Gibberella fujikuroi (strain CBS 195.34 / IMI 58289 / NRRL A-6831) (Bakanae and foot rot disease fungus).